The following is a 607-amino-acid chain: Homologous recombination OB-fold protein (607 aa).

Disordered regions lie at residues 25–49 (LRPN…SYPA), 84–108 (ISSS…SGRQ), 196–308 (PWPS…TTVT), and 531–581 (LKPP…DDLD). Composition is skewed to polar residues over residues 27 to 49 (PNSS…SYPA) and 92 to 108 (QQRM…SGRQ). Ser30 is subject to Phosphoserine. Arg281 is modified (asymmetric dimethylarginine). Low complexity predominate over residues 295–308 (SPFSTPRSTSTTVT). Residues 570-581 (PEEELPEADDLD) are compositionally biased toward acidic residues.

As to quaternary structure, interacts with MCM8; this interaction is necessary for MCM8-MCM9 helicase complex recruitment to DNA damage sites. Interacts with RPA1; this interaction associates HROB with the RPA complex.

Its subcellular location is the nucleus. It is found in the chromosome. Functionally, DNA-binding protein involved in homologous recombination that acts by recruiting the MCM8-MCM9 helicase complex to sites of DNA damage to promote DNA repair synthesis. This chain is Homologous recombination OB-fold protein, found in Rattus norvegicus (Rat).